A 117-amino-acid polypeptide reads, in one-letter code: MMLEPSIDKLLDQVDSKYSLVVLEAKRAHELRDKERPTKEFKAVKRTLQALEEIADGTVKIHPAPELKRETLVEKRELERLQAKMKEQLIKEQIAKEEAEEEAKQKNSRAAKAAAAE.

Basic and acidic residues predominate over residues 96–105 (KEEAEEEAKQ). Residues 96 to 117 (KEEAEEEAKQKNSRAAKAAAAE) are disordered. The span at 108–117 (SRAAKAAAAE) shows a compositional bias: low complexity.

The protein belongs to the RNA polymerase subunit omega family. In terms of assembly, the RNAP catalytic core consists of 2 alpha, 1 beta, 1 beta' and 1 omega subunit. When a sigma factor is associated with the core the holoenzyme is formed, which can initiate transcription.

It carries out the reaction RNA(n) + a ribonucleoside 5'-triphosphate = RNA(n+1) + diphosphate. In terms of biological role, promotes RNA polymerase assembly. Latches the N- and C-terminal regions of the beta' subunit thereby facilitating its interaction with the beta and alpha subunits. The polypeptide is DNA-directed RNA polymerase subunit omega (Lactococcus lactis subsp. cremoris (strain MG1363)).